The chain runs to 481 residues: Tryptophan biosynthesis protein TrpCF (481 aa).

Residues 1–283 (MKMTDFNTQQ…LAVRKVTLGE (283 aa)) form an indole-3-glycerol phosphate synthase region. The N-(5'-phosphoribosyl)anthranilate isomerase stretch occupies residues 284 to 481 (NKVCGLTHPD…QAAFHAIRNY (198 aa)).

The protein in the N-terminal section; belongs to the TrpC family. This sequence in the C-terminal section; belongs to the TrpF family. In terms of assembly, monomer.

The catalysed reaction is N-(5-phospho-beta-D-ribosyl)anthranilate = 1-(2-carboxyphenylamino)-1-deoxy-D-ribulose 5-phosphate. It carries out the reaction 1-(2-carboxyphenylamino)-1-deoxy-D-ribulose 5-phosphate + H(+) = (1S,2R)-1-C-(indol-3-yl)glycerol 3-phosphate + CO2 + H2O. It functions in the pathway amino-acid biosynthesis; L-tryptophan biosynthesis; L-tryptophan from chorismate: step 3/5. The protein operates within amino-acid biosynthesis; L-tryptophan biosynthesis; L-tryptophan from chorismate: step 4/5. Bifunctional enzyme that catalyzes two sequential steps of tryptophan biosynthetic pathway. The first reaction is catalyzed by the isomerase, coded by the TrpF domain; the second reaction is catalyzed by the synthase, coded by the TrpC domain. The sequence is that of Tryptophan biosynthesis protein TrpCF (trpC) from Vibrio parahaemolyticus serotype O3:K6 (strain RIMD 2210633).